The sequence spans 117 residues: Probable non-functional immunoglobulin heavy variable 7-81 (117 aa).

An N-terminal signal peptide occupies residues M1–S19. The framework-1 stretch occupies residues Q20–S44. One can recognise an Ig-like domain in the interval Q20–R117. C41 and C115 are disulfide-bonded. The complementarity-determining-1 stretch occupies residues G45 to G52. The interval M53 to W69 is framework-2. A complementarity-determining-2 region spans residues F70–P77. A glycan (N-linked (GlcNAc...) asparagine) is linked at N76. The tract at residues T78–C115 is framework-3. The segment at A116–R117 is complementarity-determining-3.

In terms of assembly, immunoglobulins are composed of two identical heavy chains and two identical light chains; disulfide-linked.

The protein resides in the secreted. It localises to the cell membrane. Its function is as follows. Probable non-functional open reading frame (ORF) of V region of the variable domain of immunoglobulin heavy chains. Non-functional ORF generally cannot participate in the synthesis of a productive immunoglobulin chain due to altered V-(D)-J or switch recombination and/or splicing site (at mRNA level) and/or conserved amino acid change (protein level). Immunoglobulins, also known as antibodies, are membrane-bound or secreted glycoproteins produced by B lymphocytes. In the recognition phase of humoral immunity, the membrane-bound immunoglobulins serve as receptors which, upon binding of a specific antigen, trigger the clonal expansion and differentiation of B lymphocytes into immunoglobulins-secreting plasma cells. Secreted immunoglobulins mediate the effector phase of humoral immunity, which results in the elimination of bound antigens. The antigen binding site is formed by the variable domain of one heavy chain, together with that of its associated light chain. Thus, each immunoglobulin has two antigen binding sites with remarkable affinity for a particular antigen. The variable domains are assembled by a process called V-(D)-J rearrangement and can then be subjected to somatic hypermutations which, after exposure to antigen and selection, allow affinity maturation for a particular antigen. This chain is Probable non-functional immunoglobulin heavy variable 7-81, found in Homo sapiens (Human).